Reading from the N-terminus, the 310-residue chain is Deoxyribonuclease gamma (310 aa).

Residues 1–25 (MSLHPASPRLASLLLFILALHDTLA) form the signal peptide. Residues 40–56 (KKENHEAMDIIVKIIKR) carry the Bipartite nuclear localization signal motif. Active-site residues include glutamate 105 and histidine 160. Residues cysteine 199 and cysteine 236 are joined by a disulfide bond. The not required for free DNA-nuclease activity but required for activity towards liposome-coated DNA stretch occupies residues 289-310 (SRAFTNNRKSVSLKKRKKGNRS). The Nuclear localization signal signature appears at 301 to 307 (LKKRKKG).

It belongs to the DNase I family. It depends on Ca(2+) as a cofactor. Requires Mg(2+) as cofactor. In terms of processing, poly-ADP-ribosylated by PARP1. ADP-ribosylation negatively regulates enzymatic activity during apoptosis. As to expression, expressed at high levels in liver, spleen and testes. Expressed at lower levels in heart, lungs, skeletal muscle and kidney. Not expressed in brain. Predominantly expressed in macrophages; at protein level. Secreted by mononuclear phagocytes.

It localises to the nucleus. It is found in the endoplasmic reticulum. The protein localises to the secreted. Its activity is regulated as follows. Inhibited by zinc. Inhibited by heparin and proteolysis by plasmin. In terms of biological role, has DNA hydrolytic activity. Is capable of both single- and double-stranded DNA cleavage, producing DNA fragments with 3'-OH ends. Can cleave chromatin to nucleosomal units and cleaves nucleosomal and liposome-coated DNA. Acts in internucleosomal DNA fragmentation (INDF) during apoptosis and necrosis. The role in apoptosis includes myogenic and neuronal differentiation, and BCR-mediated clonal deletion of self-reactive B cells. Is active on chromatin in apoptotic cell-derived membrane-coated microparticles and thus suppresses anti-DNA autoimmunity. Together with DNASE1, plays a key role in degrading neutrophil extracellular traps (NETs). NETs are mainly composed of DNA fibers and are released by neutrophils to bind pathogens during inflammation. Degradation of intravascular NETs by DNASE1 and DNASE1L3 is required to prevent formation of clots that obstruct blood vessels and cause organ damage following inflammation. This is Deoxyribonuclease gamma from Mus musculus (Mouse).